The primary structure comprises 433 residues: Eukaryotic translation initiation factor 3 subunit E (433 aa).

Residues 217 to 390 (FFNHGKGRDL…GHVVMGTQPL (174 aa)) enclose the PCI domain.

Belongs to the eIF-3 subunit E family. Component of the eukaryotic translation initiation factor 3 (eIF-3) complex.

The protein localises to the cytoplasm. In terms of biological role, component of the eukaryotic translation initiation factor 3 (eIF-3) complex, which is involved in protein synthesis of a specialized repertoire of mRNAs and, together with other initiation factors, stimulates binding of mRNA and methionyl-tRNAi to the 40S ribosome. The eIF-3 complex specifically targets and initiates translation of a subset of mRNAs involved in cell proliferation. This Anopheles gambiae (African malaria mosquito) protein is Eukaryotic translation initiation factor 3 subunit E (eIF3-S6).